Here is a 274-residue protein sequence, read N- to C-terminus: Pantothenate synthetase (274 aa).

27–34 (MGALHQGH) contacts ATP. The active-site Proton donor is His34. Residue Gln58 coordinates (R)-pantoate. Gln58 provides a ligand contact to beta-alanine. 144 to 147 (GKKD) is a binding site for ATP. Position 150 (Gln150) interacts with (R)-pantoate. Residues Ile173 and 181 to 184 (LSSR) each bind ATP.

The protein belongs to the pantothenate synthetase family. In terms of assembly, homodimer.

Its subcellular location is the cytoplasm. It carries out the reaction (R)-pantoate + beta-alanine + ATP = (R)-pantothenate + AMP + diphosphate + H(+). Its pathway is cofactor biosynthesis; (R)-pantothenate biosynthesis; (R)-pantothenate from (R)-pantoate and beta-alanine: step 1/1. In terms of biological role, catalyzes the condensation of pantoate with beta-alanine in an ATP-dependent reaction via a pantoyl-adenylate intermediate. The sequence is that of Pantothenate synthetase from Sulfurovum sp. (strain NBC37-1).